The following is a 272-amino-acid chain: Bis(5'-nucleosyl)-tetraphosphatase, symmetrical (272 aa).

It belongs to the Ap4A hydrolase family.

The enzyme catalyses P(1),P(4)-bis(5'-adenosyl) tetraphosphate + H2O = 2 ADP + 2 H(+). Functionally, hydrolyzes diadenosine 5',5'''-P1,P4-tetraphosphate to yield ADP. This Wigglesworthia glossinidia brevipalpis protein is Bis(5'-nucleosyl)-tetraphosphatase, symmetrical.